The sequence spans 275 residues: Dermonecrotic toxin LhSicTox-alphaIV2 (275 aa).

The active site involves His-5. Glu-25 and Asp-27 together coordinate Mg(2+). His-41 acts as the Nucleophile in catalysis. 2 cysteine pairs are disulfide-bonded: Cys-45–Cys-51 and Cys-47–Cys-192. Asp-85 contacts Mg(2+).

It belongs to the arthropod phospholipase D family. Class II subfamily. Mg(2+) serves as cofactor. As to expression, expressed by the venom gland.

The protein resides in the secreted. The catalysed reaction is an N-(acyl)-sphingosylphosphocholine = an N-(acyl)-sphingosyl-1,3-cyclic phosphate + choline. It carries out the reaction an N-(acyl)-sphingosylphosphoethanolamine = an N-(acyl)-sphingosyl-1,3-cyclic phosphate + ethanolamine. It catalyses the reaction a 1-acyl-sn-glycero-3-phosphocholine = a 1-acyl-sn-glycero-2,3-cyclic phosphate + choline. The enzyme catalyses a 1-acyl-sn-glycero-3-phosphoethanolamine = a 1-acyl-sn-glycero-2,3-cyclic phosphate + ethanolamine. Functionally, dermonecrotic toxins cleave the phosphodiester linkage between the phosphate and headgroup of certain phospholipids (sphingolipid and lysolipid substrates), forming an alcohol (often choline) and a cyclic phosphate. This toxin acts on sphingomyelin (SM). It may also act on ceramide phosphoethanolamine (CPE), lysophosphatidylcholine (LPC) and lysophosphatidylethanolamine (LPE), but not on lysophosphatidylserine (LPS), and lysophosphatidylglycerol (LPG). It acts by transphosphatidylation, releasing exclusively cyclic phosphate products as second products. Induces dermonecrosis, hemolysis, increased vascular permeability, edema, inflammatory response, and platelet aggregation. The sequence is that of Dermonecrotic toxin LhSicTox-alphaIV2 from Loxosceles hirsuta (Recluse spider).